A 114-amino-acid chain; its full sequence is Large ribosomal subunit protein bL20c (114 aa).

The protein belongs to the bacterial ribosomal protein bL20 family.

It is found in the plastid. The protein resides in the cyanelle. Binds directly to 23S ribosomal RNA and is necessary for the in vitro assembly process of the 50S ribosomal subunit. It is not involved in the protein synthesizing functions of that subunit. This Cyanophora paradoxa protein is Large ribosomal subunit protein bL20c (rpl20).